We begin with the raw amino-acid sequence, 180 residues long: Crossover junction endodeoxyribonuclease RuvC (180 aa).

Catalysis depends on residues aspartate 7, glutamate 66, and aspartate 138. Aspartate 7, glutamate 66, and aspartate 138 together coordinate Mg(2+).

This sequence belongs to the RuvC family. Homodimer which binds Holliday junction (HJ) DNA. The HJ becomes 2-fold symmetrical on binding to RuvC with unstacked arms; it has a different conformation from HJ DNA in complex with RuvA. In the full resolvosome a probable DNA-RuvA(4)-RuvB(12)-RuvC(2) complex forms which resolves the HJ. Mg(2+) is required as a cofactor.

The protein localises to the cytoplasm. It catalyses the reaction Endonucleolytic cleavage at a junction such as a reciprocal single-stranded crossover between two homologous DNA duplexes (Holliday junction).. In terms of biological role, the RuvA-RuvB-RuvC complex processes Holliday junction (HJ) DNA during genetic recombination and DNA repair. Endonuclease that resolves HJ intermediates. Cleaves cruciform DNA by making single-stranded nicks across the HJ at symmetrical positions within the homologous arms, yielding a 5'-phosphate and a 3'-hydroxyl group; requires a central core of homology in the junction. The consensus cleavage sequence is 5'-(A/T)TT(C/G)-3'. Cleavage occurs on the 3'-side of the TT dinucleotide at the point of strand exchange. HJ branch migration catalyzed by RuvA-RuvB allows RuvC to scan DNA until it finds its consensus sequence, where it cleaves and resolves the cruciform DNA. The sequence is that of Crossover junction endodeoxyribonuclease RuvC from Burkholderia lata (strain ATCC 17760 / DSM 23089 / LMG 22485 / NCIMB 9086 / R18194 / 383).